Consider the following 1775-residue polypeptide: ATP-dependent RNA helicase DEAH12, chloroplastic (1775 aa).

The transit peptide at 1 to 33 directs the protein to the chloroplast; that stretch reads MRNSFPPSDGGRSATDRRQQSSHSSSTNRYNSR. The segment at 1–77 is disordered; sequence MRNSFPPSDG…NPSSGYSPPV (77 aa). Low complexity predominate over residues 21-34; that stretch reads SSHSSSTNRYNSRS. Positions 35–60 are enriched in polar residues; that stretch reads AQSSPPLNHRPTWNQQHSQYPNSNFP. In terms of domain architecture, Helicase ATP-binding spans 316-480; sequence LKKIHREQIM…FFSCGILLVN (165 aa). 329–336 contributes to the ATP binding site; it reads GETGSGKS. Positions 427 to 430 match the DEAH box motif; that stretch reads DEAH. Residues 510 to 676 enclose the Helicase C-terminal domain; that stretch reads DVVKMAVEIH…VALLRMLALG (167 aa). Residues 1560 to 1767 are TRIAD supradomain; it reads IEVECPICLS…EPCYAHLRTI (208 aa). Positions 1564, 1567, 1580, 1582, 1585, 1588, 1607, 1612, 1652, 1657, 1675, 1678, 1683, 1686, 1691, 1696, 1722, and 1725 each coordinate Zn(2+). The segment at 1564 to 1612 adopts an RING-type 1 zinc-finger fold; sequence CPICLSEVDDGYSLEGCSHLFCKACLLEQFEASMRNFDAFPILCSHIDC. The IBR-type zinc-finger motif lies at 1631–1696; sequence DELFSASLSS…HLEYHPLITC (66 aa). An RING-type 2; atypical zinc finger spans residues 1722-1750; sequence CPICKSTIEKTDGCNHMKCRCGKHICWTC. C1735 is an active-site residue. C1740 and C1742 together coordinate Zn(2+).

This sequence belongs to the DEAD box helicase family. DEAH subfamily.

It localises to the plastid. The protein localises to the chloroplast. It catalyses the reaction ATP + H2O = ADP + phosphate + H(+). In Arabidopsis thaliana (Mouse-ear cress), this protein is ATP-dependent RNA helicase DEAH12, chloroplastic.